The primary structure comprises 227 residues: PKHD-type hydroxylase Swit_4046 (227 aa).

One can recognise a Fe2OG dioxygenase domain in the interval 78-178; it reads KVFPPLFNLY…RLCSFFWIQS (101 aa). Histidine 96, aspartate 98, and histidine 159 together coordinate Fe cation. Arginine 169 provides a ligand contact to 2-oxoglutarate.

Fe(2+) is required as a cofactor. Requires L-ascorbate as cofactor.

The chain is PKHD-type hydroxylase Swit_4046 from Rhizorhabdus wittichii (strain DSM 6014 / CCUG 31198 / JCM 15750 / NBRC 105917 / EY 4224 / RW1) (Sphingomonas wittichii).